The primary structure comprises 309 residues: tRNA-cytidine(32) 2-sulfurtransferase (309 aa).

The PP-loop motif signature appears at 57–62 (SGGKDS). [4Fe-4S] cluster contacts are provided by C132, C135, and C223.

It belongs to the TtcA family. Homodimer. The cofactor is Mg(2+). Requires [4Fe-4S] cluster as cofactor.

The protein resides in the cytoplasm. The enzyme catalyses cytidine(32) in tRNA + S-sulfanyl-L-cysteinyl-[cysteine desulfurase] + AH2 + ATP = 2-thiocytidine(32) in tRNA + L-cysteinyl-[cysteine desulfurase] + A + AMP + diphosphate + H(+). It participates in tRNA modification. Its function is as follows. Catalyzes the ATP-dependent 2-thiolation of cytidine in position 32 of tRNA, to form 2-thiocytidine (s(2)C32). The sulfur atoms are provided by the cysteine/cysteine desulfurase (IscS) system. In Variovorax paradoxus (strain S110), this protein is tRNA-cytidine(32) 2-sulfurtransferase.